The following is a 202-amino-acid chain: ATP-dependent Clp protease proteolytic subunit (202 aa).

S101 serves as the catalytic Nucleophile. H126 is an active-site residue.

Belongs to the peptidase S14 family. In terms of assembly, component of the chloroplastic Clp protease core complex.

Its subcellular location is the plastid. The protein localises to the chloroplast stroma. The enzyme catalyses Hydrolysis of proteins to small peptides in the presence of ATP and magnesium. alpha-casein is the usual test substrate. In the absence of ATP, only oligopeptides shorter than five residues are hydrolyzed (such as succinyl-Leu-Tyr-|-NHMec, and Leu-Tyr-Leu-|-Tyr-Trp, in which cleavage of the -Tyr-|-Leu- and -Tyr-|-Trp bonds also occurs).. Cleaves peptides in various proteins in a process that requires ATP hydrolysis. Has a chymotrypsin-like activity. Plays a major role in the degradation of misfolded proteins. This Platanus occidentalis (Sycamore) protein is ATP-dependent Clp protease proteolytic subunit.